The sequence spans 153 residues: D-aminoacyl-tRNA deacylase (153 aa).

Positions 142-143 (GP) match the Gly-cisPro motif, important for rejection of L-amino acids motif.

Belongs to the DTD family. In terms of assembly, homodimer.

It is found in the cytoplasm. The enzyme catalyses glycyl-tRNA(Ala) + H2O = tRNA(Ala) + glycine + H(+). The catalysed reaction is a D-aminoacyl-tRNA + H2O = a tRNA + a D-alpha-amino acid + H(+). In terms of biological role, an aminoacyl-tRNA editing enzyme that deacylates mischarged D-aminoacyl-tRNAs. Also deacylates mischarged glycyl-tRNA(Ala), protecting cells against glycine mischarging by AlaRS. Acts via tRNA-based rather than protein-based catalysis; rejects L-amino acids rather than detecting D-amino acids in the active site. By recycling D-aminoacyl-tRNA to D-amino acids and free tRNA molecules, this enzyme counteracts the toxicity associated with the formation of D-aminoacyl-tRNA entities in vivo and helps enforce protein L-homochirality. This is D-aminoacyl-tRNA deacylase from Cupriavidus necator (strain ATCC 17699 / DSM 428 / KCTC 22496 / NCIMB 10442 / H16 / Stanier 337) (Ralstonia eutropha).